A 330-amino-acid polypeptide reads, in one-letter code: Ferredoxin--NADP reductase (330 aa).

FAD-binding residues include Glu-35, Gln-43, Tyr-48, Val-90, Phe-123, Asp-285, and Thr-326.

It belongs to the ferredoxin--NADP reductase type 2 family. As to quaternary structure, homodimer. FAD is required as a cofactor.

It carries out the reaction 2 reduced [2Fe-2S]-[ferredoxin] + NADP(+) + H(+) = 2 oxidized [2Fe-2S]-[ferredoxin] + NADPH. In Streptococcus agalactiae serotype Ia (strain ATCC 27591 / A909 / CDC SS700), this protein is Ferredoxin--NADP reductase.